A 431-amino-acid polypeptide reads, in one-letter code: Trigger factor (431 aa).

The PPIase FKBP-type domain maps to 164–249 (GDIAVIDFKG…IKEIKRKELP (86 aa)).

This sequence belongs to the FKBP-type PPIase family. Tig subfamily.

It is found in the cytoplasm. The catalysed reaction is [protein]-peptidylproline (omega=180) = [protein]-peptidylproline (omega=0). Its function is as follows. Involved in protein export. Acts as a chaperone by maintaining the newly synthesized protein in an open conformation. Functions as a peptidyl-prolyl cis-trans isomerase. This Clostridium acetobutylicum (strain ATCC 824 / DSM 792 / JCM 1419 / IAM 19013 / LMG 5710 / NBRC 13948 / NRRL B-527 / VKM B-1787 / 2291 / W) protein is Trigger factor.